A 348-amino-acid polypeptide reads, in one-letter code: L-asparaginase 2 (348 aa).

The N-terminal stretch at 1 to 22 (MEFFKKTALAALVMGFSGAALA) is a signal peptide. The 325-residue stretch at 24–348 (PNITILATGG…QQIQQIFNQY (325 aa)) folds into the Asparaginase/glutaminase domain. Thr-34 functions as the O-isoaspartyl threonine intermediate in the catalytic mechanism. Substrate contacts are provided by residues 80–81 (SQ) and 111–112 (TD). A disulfide bridge links Cys-99 with Cys-127.

It belongs to the asparaginase 1 family. Homotetramer.

It localises to the periplasm. The enzyme catalyses L-asparagine + H2O = L-aspartate + NH4(+). The polypeptide is L-asparaginase 2 (ansB) (Escherichia coli (strain K12)).